A 122-amino-acid chain; its full sequence is Large ribosomal subunit protein uL14c (122 aa).

This sequence belongs to the universal ribosomal protein uL14 family. Part of the 50S ribosomal subunit.

It localises to the plastid. Its subcellular location is the chloroplast. Functionally, binds to 23S rRNA. The sequence is that of Large ribosomal subunit protein uL14c from Guizotia abyssinica (Niger).